The sequence spans 89 residues: Small ribosomal subunit protein uS15 (89 aa).

This sequence belongs to the universal ribosomal protein uS15 family. Part of the 30S ribosomal subunit. Forms a bridge to the 50S subunit in the 70S ribosome, contacting the 23S rRNA.

Its function is as follows. One of the primary rRNA binding proteins, it binds directly to 16S rRNA where it helps nucleate assembly of the platform of the 30S subunit by binding and bridging several RNA helices of the 16S rRNA. In terms of biological role, forms an intersubunit bridge (bridge B4) with the 23S rRNA of the 50S subunit in the ribosome. The sequence is that of Small ribosomal subunit protein uS15 from Mannheimia succiniciproducens (strain KCTC 0769BP / MBEL55E).